The chain runs to 328 residues: D-cysteine desulfhydrase (328 aa).

The residue at position 51 (Lys-51) is an N6-(pyridoxal phosphate)lysine.

Belongs to the ACC deaminase/D-cysteine desulfhydrase family. Homodimer. Pyridoxal 5'-phosphate is required as a cofactor.

It carries out the reaction D-cysteine + H2O = hydrogen sulfide + pyruvate + NH4(+) + H(+). Its function is as follows. Catalyzes the alpha,beta-elimination reaction of D-cysteine and of several D-cysteine derivatives. It could be a defense mechanism against D-cysteine. The chain is D-cysteine desulfhydrase from Escherichia coli O9:H4 (strain HS).